A 411-amino-acid polypeptide reads, in one-letter code: MVVKINENYLKLKSSYLFVEVARREAEFQKNNPDADIIKMGIGDVTKPLAPSVIKAFQGAVDEMGNADTFRGYGPEQGYDFLAEEIIKNDFEPFGVSLDTDEVFISDGAKCDTGNIQEIFDLGNKIAVTDPVYTVYVDTNVMAGRTGEMKDDGMYEGLTYLKCNAENGFVPELPEEDVDIIYLCYPNNPTGTTLTYDQLKVFVDYAIEHKAIILFDAAYECFIREDDVPHTIYEIEGAKNVAIEFRSFSKMAGFTGTRCAYTVVPKEVAGYDSKGNEVQLNQLWNRRQTTKFNGVSYPVQVAAAAVYSDDGKKEIKEIIDYYMENAKVIKSSLEKLGLEVYGGVNSPYIWVKTPNNMDSWAFFDLLLNEANVVGTPGSGFGPSGEGYLRLTAFNTLENTKEAMDRISKLNF.

The substrate site is built by Tyr-16 and Gly-43. Residues Tyr-73, 109–110 (AK), Tyr-133, Asn-188, Tyr-219, and 247–249 (SFS) contribute to the pyridoxal 5'-phosphate site. 3 residues coordinate substrate: Lys-110, Tyr-133, and Asn-188. Position 250 is an N6-(pyridoxal phosphate)lysine (Lys-250). Residues Arg-258 and Asn-293 each coordinate pyridoxal 5'-phosphate. 2 residues coordinate substrate: Asn-293 and Arg-389.

This sequence belongs to the class-I pyridoxal-phosphate-dependent aminotransferase family. LL-diaminopimelate aminotransferase subfamily. In terms of assembly, homodimer. Pyridoxal 5'-phosphate serves as cofactor.

It catalyses the reaction (2S,6S)-2,6-diaminopimelate + 2-oxoglutarate = (S)-2,3,4,5-tetrahydrodipicolinate + L-glutamate + H2O + H(+). The protein operates within amino-acid biosynthesis; L-lysine biosynthesis via DAP pathway; LL-2,6-diaminopimelate from (S)-tetrahydrodipicolinate (aminotransferase route): step 1/1. In terms of biological role, involved in the synthesis of meso-diaminopimelate (m-DAP or DL-DAP), required for both lysine and peptidoglycan biosynthesis. Catalyzes the direct conversion of tetrahydrodipicolinate to LL-diaminopimelate. The sequence is that of LL-diaminopimelate aminotransferase from Methanobrevibacter smithii (strain ATCC 35061 / DSM 861 / OCM 144 / PS).